The following is a 156-amino-acid chain: Aspartate carbamoyltransferase regulatory chain (156 aa).

Residues C109, C114, C138, and C141 each coordinate Zn(2+).

The protein belongs to the PyrI family. In terms of assembly, contains catalytic and regulatory chains. It depends on Zn(2+) as a cofactor.

Involved in allosteric regulation of aspartate carbamoyltransferase. This Baumannia cicadellinicola subsp. Homalodisca coagulata protein is Aspartate carbamoyltransferase regulatory chain.